We begin with the raw amino-acid sequence, 259 residues long: Putative cysteine-rich repeat secretory protein 25 (259 aa).

A signal peptide spans Met-1–Ser-31. Gnk2-homologous domains are found at residues Ala-37–Thr-138 and Tyr-144–Phe-256.

It belongs to the cysteine-rich repeat secretory protein family.

Its subcellular location is the secreted. The sequence is that of Putative cysteine-rich repeat secretory protein 25 (CRRSP25) from Arabidopsis thaliana (Mouse-ear cress).